The following is a 392-amino-acid chain: Protein trapped in endoderm-1 (392 aa).

The Extracellular portion of the chain corresponds to 1 to 39 (MDQDMGMATGYFQDADMQMDEPAAATQSIYPHSATLFAA). A helical membrane pass occupies residues 40–60 (ISACVFVTIGVLGNLITLLAL). Over 61–73 (LKSPTIREHATTA) the chain is Cytoplasmic. A helical membrane pass occupies residues 74–94 (FVISLSISDLLFCSFSLPLTA). Residues 95 to 110 (VRFFQESWTFGTTLCK) are Extracellular-facing. The helical transmembrane segment at 111 to 131 (IFPVIFYGNVAVSLLSMVGIT) threads the bilayer. Topologically, residues 132–156 (LNRYILIACHSRYSQIYKPKFITLQ) are cytoplasmic. A helical transmembrane segment spans residues 157 to 177 (LLFVWAVSFLLLLPPILGIWG). Over 178 to 202 (EMGLDEATFSCTILKKEGRSIKKTL) the chain is Extracellular. Residues 203 to 223 (FVIGFLLPCLVIIVSYSCIYI) traverse the membrane as a helical segment. At 224-268 (TVLHQKKKIRNHDNFQIAAAKGSSSSGGGSYMTTTCTRKAREDNR) the chain is on the cytoplasmic side. A helical membrane pass occupies residues 269-289 (LTVMMVTIFLCFLVCFLPLML). At 290–302 (ANVVDDERNTSYP) the chain is on the extracellular side. The N-linked (GlcNAc...) asparagine glycan is linked to Asn-298. A helical transmembrane segment spans residues 303-323 (WLHIIASVMAWASSVINPIIY). At 324–392 (AASNRNYRVA…INQMCQTYSV (69 aa)) the chain is on the cytoplasmic side. 3 positions are modified to phosphoserine: Ser-359, Ser-362, and Ser-366. Residue Thr-372 is modified to Phosphothreonine.

Belongs to the G-protein coupled receptor 1 family. In embryos, expression is seen at highest levels in the cuprophilic cells and at lower levels in the amnioserosa, developing CNS, cardiac mesoderm primordium and midline glia.

The protein localises to the cell membrane. Functionally, essential for the first active step of germ cell migration: transepithelial migration of germ cells through the posterior midgut (PMG) epithelium. This is Protein trapped in endoderm-1 (Tre1) from Drosophila melanogaster (Fruit fly).